The sequence spans 1195 residues: Phosphatidylinositol-3,5-bisphosphate 3-phosphatase MTMR4 (1195 aa).

A Phosphoserine modification is found at Ser-8. The region spanning 153–570 (EHIRCRQEAE…RALHLWTAVY (418 aa)) is the Myotubularin phosphatase domain. A 1,2-diacyl-sn-glycero-3-phospho-(1D-myo-inositol-3,5-bisphosphate) contacts are provided by Asn-320, Asn-345, and Ile-346. Residues Asn-320, Asn-345, and Ile-346 each contribute to the a 1,2-diacyl-sn-glycero-3-phospho-(1D-myo-inositol-3-phosphate) site. Cys-407 (phosphocysteine intermediate) is an active-site residue. A 1,2-diacyl-sn-glycero-3-phospho-(1D-myo-inositol-3,5-bisphosphate) is bound by residues Ser-408, Asp-409, Gly-410, Trp-411, Asp-412, Arg-413, Lys-449, and Arg-453. Residues Ser-408, Asp-409, Gly-410, Trp-411, Asp-412, and Arg-413 each contribute to the a 1,2-diacyl-sn-glycero-3-phospho-(1D-myo-inositol-3-phosphate) site. Arg-453 is an a 1,2-diacyl-sn-glycero-3-phospho-(1D-myo-inositol-3-phosphate) binding site. 2 positions are modified to phosphoserine: Ser-610 and Ser-629. 3 disordered regions span residues 645 to 756 (EPWH…EHCP), 780 to 800 (ESSQ…SMLG), and 827 to 877 (DPST…LLEN). Positions 720–729 (PEIKVLEETK) are enriched in basic and acidic residues. Polar residues-rich tracts occupy residues 780 to 795 (ESSQ…QAQP) and 831 to 854 (DFLN…SSVP). The PY-motif; substrate motif for NEDD4 motif lies at 1004–1008 (VPPLY). A coiled-coil region spans residues 1023–1055 (HRLRQIEAGYKQEVEQLRRQVRELQMRLDIRHC). The FYVE-type zinc-finger motif lies at 1114–1174 (DHMASHCYNC…VCNSCYEHIQ (61 aa)). Cys-1120, Cys-1123, Cys-1136, Cys-1139, Cys-1144, Cys-1147, Cys-1166, and Cys-1169 together coordinate Zn(2+).

This sequence belongs to the protein-tyrosine phosphatase family. Non-receptor class myotubularin subfamily. As to quaternary structure, homooligomeric. Forms MTMR3:MTMR4 heterooligomers; regulates the localization of both proteins. The MTMR3:MTMR4 heterooligomer can also recruit both CEP55 and PLK1; occurs during early mitosis, regulates the phosphorylation of CEP55 by PLK1 and its recruitment to the midbody where it can mediate cell abscission. Interacts with SMAD2 and SMAD3; negatively regulates TGF-beta signaling through SMAD2 and SMAD3 dephosphorylation and retention in endosomes. Interacts with SMAD1; negatively regulates BMP signaling through SMAD1 dephosphorylation and retention in endosomes. Post-translationally, ubiquitinated. Ubiquitination by NEDD4 probably leads to proteasomal degradation. In terms of processing, phosphorylated by CDK1 during mitosis. In terms of tissue distribution, expressed in brain, heart, kidney, spleen, liver, colon, testis, muscle, placenta, thyroid gland, pancreas, ovary, prostate, skin, peripheral blood, and bone marrow.

It is found in the early endosome membrane. It localises to the recycling endosome membrane. The protein resides in the late endosome membrane. The protein localises to the cytoplasmic vesicle. Its subcellular location is the phagosome membrane. The catalysed reaction is a 1,2-diacyl-sn-glycero-3-phospho-(1D-myo-inositol-3-phosphate) + H2O = a 1,2-diacyl-sn-glycero-3-phospho-(1D-myo-inositol) + phosphate. It carries out the reaction a 1,2-diacyl-sn-glycero-3-phospho-(1D-myo-inositol-3,5-bisphosphate) + H2O = a 1,2-diacyl-sn-glycero-3-phospho-(1D-myo-inositol-5-phosphate) + phosphate. The enzyme catalyses 1,2-dioctanoyl-sn-glycero-3-phospho-(1-D-myo-inositol-3-phosphate) + H2O = 1,2-dioctanoyl-sn-glycero-3-phospho-(1D-myo-inositol) + phosphate. It catalyses the reaction 1,2-dioctanoyl-sn-glycero-3-phospho-(1D-myo-inositol-3,5-bisphosphate) + H2O = 1,2-dioctanoyl-sn-glycero-3-phospho-(1D-myo-inositol-5-phosphate) + phosphate. The phosphatidylinositol-3-phosphate phosphatase activity is inhibited by vanadate. Lipid phosphatase that specifically dephosphorylates the D-3 position of phosphatidylinositol 3-phosphate and phosphatidylinositol 3,5-bisphosphate, generating phosphatidylinositol and phosphatidylinositol 5-phosphate. Decreases the levels of phosphatidylinositol 3-phosphate, a phospholipid found in cell membranes where it acts as key regulator of both cell signaling and intracellular membrane traffic, in a subset of endosomal membranes to negatively regulate both endocytic recycling and trafficking and/or maturation of endosomes toward lysosomes. Through phosphatidylinositol 3-phosphate turnover in phagosome membranes regulates phagocytosis and phagosome maturation. By decreasing phosphatidylinositol 3-monophosphate (PI3P) levels in immune cells it can also regulate the innate immune response. Beside its lipid phosphatase activity, can also function as a molecular adapter to regulate midbody abscission during mitotic cytokinesis. Can also negatively regulate TGF-beta and BMP signaling through Smad proteins dephosphorylation and retention in endosomes. This Homo sapiens (Human) protein is Phosphatidylinositol-3,5-bisphosphate 3-phosphatase MTMR4.